The sequence spans 71 residues: Defensin 1 (71 aa).

Positions Lys1–Ala25 are cleaved as a signal peptide. 3 disulfide bridges follow: Cys28–Cys71, Cys39–Cys60, and Cys45–Cys65.

Belongs to the DEFL family. May form dimers. Post-translationally, not glycosylated. Contains 4 disulfide bonds. In terms of processing, met-61 and Met-63 might be oxidized in some molecules.

Probably has antifungal activity. The sequence is that of Defensin 1 from Arachis hypogaea (Peanut).